A 196-amino-acid polypeptide reads, in one-letter code: MAQDIVMVVGLGNPGSDYENTRHNAGALFVEALAREAGQTLRPEKKYHGLYARIQWQGLDLHLLNPSTFMNRSGTAIKALADFFKISPEQILVAHDELDLPPGTAKLKKGGGHGGHNGLRDTIAHLGTNDFQRLRLGIGHPGDSRKVTGFVLGRLGKQETEQLTAVFDEVMRVLPDAASGKLAAAMNRLHSFKPTP.

Position 18 (Tyr18) interacts with tRNA. The active-site Proton acceptor is the His23. TRNA-binding residues include Phe69, Asn71, and Asn117.

The protein belongs to the PTH family. Monomer.

It localises to the cytoplasm. It catalyses the reaction an N-acyl-L-alpha-aminoacyl-tRNA + H2O = an N-acyl-L-amino acid + a tRNA + H(+). In terms of biological role, hydrolyzes ribosome-free peptidyl-tRNAs (with 1 or more amino acids incorporated), which drop off the ribosome during protein synthesis, or as a result of ribosome stalling. Catalyzes the release of premature peptidyl moieties from peptidyl-tRNA molecules trapped in stalled 50S ribosomal subunits, and thus maintains levels of free tRNAs and 50S ribosomes. This is Peptidyl-tRNA hydrolase from Marinobacter nauticus (strain ATCC 700491 / DSM 11845 / VT8) (Marinobacter aquaeolei).